Consider the following 332-residue polypeptide: tRNA(Ile)-lysidine synthase (332 aa).

39 to 44 (SGGADS) is a binding site for ATP.

It belongs to the tRNA(Ile)-lysidine synthase family.

It is found in the cytoplasm. It carries out the reaction cytidine(34) in tRNA(Ile2) + L-lysine + ATP = lysidine(34) in tRNA(Ile2) + AMP + diphosphate + H(+). In terms of biological role, ligates lysine onto the cytidine present at position 34 of the AUA codon-specific tRNA(Ile) that contains the anticodon CAU, in an ATP-dependent manner. Cytidine is converted to lysidine, thus changing the amino acid specificity of the tRNA from methionine to isoleucine. The chain is tRNA(Ile)-lysidine synthase from Leifsonia xyli subsp. xyli (strain CTCB07).